A 335-amino-acid chain; its full sequence is Biotin synthase (335 aa).

The region spanning 46–274 (YNIQLASLFS…KSKIRLSAGR (229 aa)) is the Radical SAM core domain. [4Fe-4S] cluster contacts are provided by cysteine 61, cysteine 65, and cysteine 68. [2Fe-2S] cluster-binding residues include cysteine 105, cysteine 137, cysteine 197, and arginine 269.

This sequence belongs to the radical SAM superfamily. Biotin synthase family. As to quaternary structure, homodimer. Requires [4Fe-4S] cluster as cofactor. [2Fe-2S] cluster serves as cofactor.

It carries out the reaction (4R,5S)-dethiobiotin + (sulfur carrier)-SH + 2 reduced [2Fe-2S]-[ferredoxin] + 2 S-adenosyl-L-methionine = (sulfur carrier)-H + biotin + 2 5'-deoxyadenosine + 2 L-methionine + 2 oxidized [2Fe-2S]-[ferredoxin]. It participates in cofactor biosynthesis; biotin biosynthesis; biotin from 7,8-diaminononanoate: step 2/2. Catalyzes the conversion of dethiobiotin (DTB) to biotin by the insertion of a sulfur atom into dethiobiotin via a radical-based mechanism. This Prochlorococcus marinus (strain MIT 9312) protein is Biotin synthase.